The sequence spans 484 residues: D-aminoacylase (484 aa).

Belongs to the metallo-dependent hydrolases superfamily. N-acyl-D-amino-acid deacylase family. Zn(2+) serves as cofactor.

It localises to the cytoplasm. The catalysed reaction is an N-acyl-D-amino acid + H2O = a D-alpha-amino acid + a carboxylate. Functionally, has a wide specificity; hydrolyzes N-acyl derivative of neutral D-amino acids. This is D-aminoacylase (dan) from Alcaligenes xylosoxydans xylosoxydans (Achromobacter xylosoxidans).